The sequence spans 487 residues: Phenylalanine--tRNA ligase alpha subunit (487 aa).

Residues Thr319, 361 to 363 (QVE), and Tyr401 contribute to the L-phenylalanine site. Mg(2+) is bound at residue Glu403. L-phenylalanine is bound at residue Phe427.

The protein belongs to the class-II aminoacyl-tRNA synthetase family. Phe-tRNA synthetase alpha subunit type 2 subfamily. Tetramer of two alpha and two beta subunits. Mg(2+) is required as a cofactor.

Its subcellular location is the cytoplasm. The catalysed reaction is tRNA(Phe) + L-phenylalanine + ATP = L-phenylalanyl-tRNA(Phe) + AMP + diphosphate + H(+). This Dictyostelium discoideum (Social amoeba) protein is Phenylalanine--tRNA ligase alpha subunit (phesA).